Here is a 456-residue protein sequence, read N- to C-terminus: MGKLFGTFGVRGIANEEITPEFALKIGMAFGTLLKREGRERPLVVVGRDTRVSGEMLKDALISGLLSTGCDVIDVGIAPTPAIQWATNHFNADGGAVITASHNPPEYNGIKLLEPNGMGLKKEREAIVEELFFSEDFHRAKWNEIGELRKEDIIKPYIEAIKNRVDVEAIKKRRPFVVVDTSNGAGSLTLPYLLRELGCKVVSVNAHPDGHFPARNPEPNEENLKGFMEIVKALGADFGVAQDGDADRAVFIDENGRFIQGDKTFALVADAVLRENGGGLLVTTIATSNLLDDIAKRNGAKVMRTKVGDLIVARALLENNGTIGGEENGGVIFPDFVLGRDGAMTTAKIVEIFAKSGKKFSELIDELPKYYQFKTKRHVEGDRKAIVAKVAELAEKKGYKIDTTDGTKIIFDDGWVLVRASGTEPIIRIFSEAKSEEKAREYLELGIKLLEEALKG.

S101 (phosphoserine intermediate) is an active-site residue. Mg(2+) is bound by residues S101, D243, D245, and D247. At S101 the chain carries Phosphoserine; by autocatalysis.

This sequence belongs to the phosphohexose mutase family. In terms of assembly, homotetramer. Requires Mg(2+) as cofactor. Activated by phosphorylation.

It catalyses the reaction alpha-D-glucose 1-phosphate = alpha-D-glucose 6-phosphate. The enzyme catalyses alpha-D-mannose 1-phosphate = D-mannose 6-phosphate. In terms of biological role, catalyzes the interconversion of glucose 1-phosphate and glucose 6-phosphate, and the interconversion of mannose 1-phosphate and mannose 6-phosphate. Also displays low activity with deoxyribose 1-phosphate and glucosamine 1-phosphate. In Thermococcus kodakarensis (strain ATCC BAA-918 / JCM 12380 / KOD1) (Pyrococcus kodakaraensis (strain KOD1)), this protein is Phosphoglucomutase/phosphomannomutase.